A 396-amino-acid chain; its full sequence is MAAEPPALRLRPPGSTGDSPPVPRLLGGCVPLSHQVAGHMYGKDKVGILQHPDGTVLKQLQPPPRGPRELEFYTMVYAADCADAVLLELRKHLPKYYGVWSPPSAPNDVYLKLEDVTHKFNKPCIMDVKIGRKSYDPFASAEKIQQQVSKYPLMEEIGFLVLGMRVYHLHSDSYETQNQHYGRGLTKETLKEGVSKFFHNGFCLRKDAVAASIQKVEKILQWFENQKQLNFYASSLLFVYEGSSQPATTKSNDRTLAGRFLSKGALSDADVLECNNNFHLFSSPANGTSVGKSLSKAYSRHRKLYAKKHQSQTSLKVETLEQDNGWKSMSQEHLNGNVLSQLEKVFYHLPAGRQEIAEAEVRMIDFAHVFPSNTVDEGYVYGLKHLIAVLRSILDS.

The segment covering 1-13 (MAAEPPALRLRPP) has biased composition (low complexity). Residues 1–22 (MAAEPPALRLRPPGSTGDSPPV) form a disordered region. Position 2 is an N-acetylalanine (Ala2). Ser19 carries the post-translational modification Phosphoserine. Lys58 serves as a coordination point for ATP. Arg65 serves as a coordination point for substrate. Residues 114 to 116 (EDV) and Asp127 contribute to the ATP site. Residues Lys129, 143-150 (KIQQQVSK), and Gln179 each bind substrate. The short motif at 300–310 (RHRKLYAKKHQ) is the Nuclear localization signal element. Asp365 serves as a coordination point for ATP.

This sequence belongs to the inositol phosphokinase (IPK) family. Mg(2+) serves as cofactor. In terms of tissue distribution, highly expressed in kidney, and at lower levels in hippocampus, brain cortex, cerebellum, heart and lung.

It localises to the nucleus. It catalyses the reaction 1D-myo-inositol 1,4,5-trisphosphate + 2 ATP = 1D-myo-inositol 1,3,4,5,6-pentakisphosphate + 2 ADP + 2 H(+). It carries out the reaction 1D-myo-inositol 1,3,4,6-tetrakisphosphate + ATP = 1D-myo-inositol 1,3,4,5,6-pentakisphosphate + ADP + H(+). The catalysed reaction is 1-octadecanoyl-2-(5Z,8Z,11Z,14Z)-eicosatetraenoyl-sn-glycero-3-phospho-1D-myo-inositol 4,5-bisphosphate + ATP = 1-octadecanoyl-2-(5Z,8Z,11Z,14Z-eicosatetraenoyl)-sn-glycero-3-phospho-(1D-myo-inositol 3,4,5-triphosphate) + ADP + H(+). The enzyme catalyses a 1,2-diacyl-sn-glycero-3-phospho-(1D-myo-inositol-4,5-bisphosphate) + ATP = a 1,2-diacyl-sn-glycero-3-phospho-(1D-myo-inositol-3,4,5-trisphosphate) + ADP + H(+). It catalyses the reaction 1D-myo-inositol 1,4,5,6-tetrakisphosphate + ATP = 1D-myo-inositol 1,3,4,5,6-pentakisphosphate + ADP + H(+). Its pathway is phospholipid metabolism; phosphatidylinositol metabolism. Functionally, inositol phosphate kinase with a broad substrate specificity. Phosphorylates inositol 1,4,5-trisphosphate (Ins(1,4,5)P3) first to inositol 1,3,4,5-tetrakisphosphate and then to inositol 1,3,4,5,6-pentakisphosphate (Ins(1,3,4,5,6)P5). Phosphorylates inositol 1,3,4,6-tetrakisphosphate (Ins(1,3,4,6)P4). Phosphorylates inositol 1,4,5,6-tetrakisphosphate (Ins(1,4,5,6)P4). Phosphorylates glycero-3-phospho-1D-myo-inositol 4,5-bisphosphate to glycero-3-phospho-1D-myo-inositol 3,4,5-trisphosphate. Plays an important role in MLKL-mediated necroptosis via its role in the biosynthesis of inositol pentakisphosphate (InsP5) and inositol hexakisphosphate (InsP6). Binding of these highly phosphorylated inositol phosphates to MLKL mediates the release of an N-terminal auto-inhibitory region, leading to activation of the kinase. Essential for activated phospho-MLKL to oligomerize and localize to the cell membrane during necroptosis. Required for normal embryonic development, probably via its role in the biosynthesis of inositol 1,3,4,5,6-pentakisphosphate (Ins(1,3,4,5,6)P5) and inositol hexakisphosphate (InsP6). This chain is Inositol polyphosphate multikinase (Ipmk), found in Rattus norvegicus (Rat).